The sequence spans 146 residues: Flagellar assembly factor FliW 1 (146 aa).

The protein belongs to the FliW family. As to quaternary structure, interacts with translational regulator CsrA and flagellin(s).

It is found in the cytoplasm. Functionally, acts as an anti-CsrA protein, binds CsrA and prevents it from repressing translation of its target genes, one of which is flagellin. Binds to flagellin and participates in the assembly of the flagellum. In Helicobacter hepaticus (strain ATCC 51449 / 3B1), this protein is Flagellar assembly factor FliW 1.